The following is a 327-amino-acid chain: Annexin A8 (327 aa).

Annexin repeat units follow at residues 21-92, 93-164, 177-249, and 253-324; these read FNPD…ALMY, PPYR…CLLQ, GLAL…TVVK, and NLHS…SLVG. Ca(2+)-binding residues include methionine 266, glycine 268, glycine 270, and aspartate 310.

Belongs to the annexin family.

This protein is an anticoagulant protein that acts as an indirect inhibitor of the thromboplastin-specific complex, which is involved in the blood coagulation cascade. The sequence is that of Annexin A8 (ANXA8) from Pan troglodytes (Chimpanzee).